We begin with the raw amino-acid sequence, 218 residues long: Ribose-5-phosphate isomerase A (218 aa).

Substrate is bound by residues 28–31 (TGST), 81–84 (DGAD), and 94–97 (KGGG). Glu103 serves as the catalytic Proton acceptor. Lys121 is a substrate binding site.

Belongs to the ribose 5-phosphate isomerase family. In terms of assembly, homodimer.

It catalyses the reaction aldehydo-D-ribose 5-phosphate = D-ribulose 5-phosphate. The protein operates within carbohydrate degradation; pentose phosphate pathway; D-ribose 5-phosphate from D-ribulose 5-phosphate (non-oxidative stage): step 1/1. In terms of biological role, catalyzes the reversible conversion of ribose-5-phosphate to ribulose 5-phosphate. The sequence is that of Ribose-5-phosphate isomerase A from Proteus mirabilis (strain HI4320).